Here is a 274-residue protein sequence, read N- to C-terminus: Mitochondrial outer membrane protein porin 4 (274 aa).

An N-acetylglycine modification is found at Gly2. Ser76 is subject to Phosphoserine.

It belongs to the eukaryotic mitochondrial porin (TC 1.B.8.1) family. Widely expressed.

The protein resides in the cell membrane. It is found in the mitochondrion outer membrane. Functionally, forms a channel through the mitochondrial outer membrane that allows diffusion of small hydrophilic molecules. The channel adopts an open conformation at low or zero membrane potential and a closed conformation at potentials above 30-40 mV. The open state has a weak anion selectivity whereas the closed state is cation-selective. Involved in plant growth and development at the vegetative and reproductive stages. Is important for leaf and pollen development and mitochondrial membrane potential steady state. May be involved in disease resistance. This Arabidopsis thaliana (Mouse-ear cress) protein is Mitochondrial outer membrane protein porin 4 (VDAC4).